The chain runs to 200 residues: Large ribosomal subunit protein uL4 (200 aa).

The tract at residues 43–71 is disordered; the sequence is RAQKTRAEVSGSGKKPWRQKGTGRARSGD.

The protein belongs to the universal ribosomal protein uL4 family. In terms of assembly, part of the 50S ribosomal subunit.

One of the primary rRNA binding proteins, this protein initially binds near the 5'-end of the 23S rRNA. It is important during the early stages of 50S assembly. It makes multiple contacts with different domains of the 23S rRNA in the assembled 50S subunit and ribosome. In terms of biological role, forms part of the polypeptide exit tunnel. This Histophilus somni (strain 2336) (Haemophilus somnus) protein is Large ribosomal subunit protein uL4.